The chain runs to 298 residues: Inosose dehydratase (298 aa).

The protein belongs to the IolE/MocC family. Requires glutathione as cofactor. The cofactor is Co(2+). It depends on Mn(2+) as a cofactor.

The enzyme catalyses scyllo-inosose = 3D-3,5/4-trihydroxycyclohexane-1,2-dione + H2O. In terms of biological role, catalyzes the dehydration of inosose (2-keto-myo-inositol, 2KMI or 2,4,6/3,5-pentahydroxycyclohexanone) to 3D-(3,5/4)-trihydroxycyclohexane-1,2-dione (D-2,3-diketo-4-deoxy-epi-inositol). This is Inosose dehydratase from Histophilus somni (strain 129Pt) (Haemophilus somnus).